The sequence spans 157 residues: uncharacterized protein (157 aa).

This is an uncharacterized protein from Rickettsia prowazekii (strain Madrid E).